We begin with the raw amino-acid sequence, 188 residues long: NADH-quinone oxidoreductase subunit B (188 aa).

The [4Fe-4S] cluster site is built by Cys67, Cys68, Cys132, and Cys162.

It belongs to the complex I 20 kDa subunit family. In terms of assembly, NDH-1 is composed of 14 different subunits. Subunits NuoB, C, D, E, F, and G constitute the peripheral sector of the complex. The cofactor is [4Fe-4S] cluster.

Its subcellular location is the cell inner membrane. The catalysed reaction is a quinone + NADH + 5 H(+)(in) = a quinol + NAD(+) + 4 H(+)(out). In terms of biological role, NDH-1 shuttles electrons from NADH, via FMN and iron-sulfur (Fe-S) centers, to quinones in the respiratory chain. Couples the redox reaction to proton translocation (for every two electrons transferred, four hydrogen ions are translocated across the cytoplasmic membrane), and thus conserves the redox energy in a proton gradient. This is NADH-quinone oxidoreductase subunit B from Maricaulis maris (strain MCS10) (Caulobacter maris).